A 109-amino-acid chain; its full sequence is Putative gametogenetin-binding protein 1 (109 aa).

Residues 24–109 (KAFRSTDTVG…KGEMGNWPPE (86 aa)) are interaction with GGN.

In terms of assembly, interacts with CCDC159. Interacts with GGN.

The protein localises to the cytoplasm. It is found in the membrane. The protein resides in the golgi apparatus. Functionally, may be involved in spermatogenesis. In Homo sapiens (Human), this protein is Putative gametogenetin-binding protein 1 (GGNBP1).